Here is a 1215-residue protein sequence, read N- to C-terminus: MERIHVAVRARPLTAEDAGSSPWRVSGNAIALSTQPSIRFEFDRIFGEECRTADVYGARTKHIVDSAVRGFNGTVFAYGQTNSGKTYTMRGSGNEPGIIPLAVHDLFRTIEEHLDREFLLRMSYMEIYNEEINDLLVPEHRKLQIHESIERGIYVAGLREEIVTCPEQVLEFMSFGESHRHIGETNMNVYSSRSHTIFRMVIESREKVDESEAGESCDAVRVSVLNLVDLAGSERAAKTGAEGVRLKEGSHINKSLMTLGTVIKKLSEGIEGQGGHVPYRDSKLTRILQPALGGNANTAIICNITLAQVHADETKSSLQFASRALRVTNCACVNEILTDAALLKRQRKEIEELRAKLRNSQSEHWEEEILNLRNTLLQSELEKERISLELEEEKKAKEQRDKRLIEQAKKIENLSSLVLNSERDDRTTVSSKNKRRLTWCPGLLSRQFDGQVLESVQEDPPSSTVRHGRNMEMPLHFEELIQESCESSIKHYTDAYSSGSLSCEDDSLPDSHALLHVTSRRKPNTMKKSDQEQLMGLASERIIPQELNDWKYTTQSQENIKACVNGLSARESEAILVIKQLEDQIKLLELEKSSFQNNLDDVLELATQQKASFHEKYEELQQNALVAQEQAKIANEKLSKQEAAYEFLTGIFVETESIAVQMDQSTRSVDNALSFIEELFQNLFMMAKNFTEAKQFVCGDITQFSSVIRDYENISNCLREKLSKLEMEKKILDEQSLDQKDELQRLKSSLESCEKAMEDCNIQNELEKDSILSELLTLQKEVVYLSSSSLMKEKESIRKELDRTKTKLKETENKLKNSIQEKIKLESEKAEAQREIKKLQSQRTLLERDLRKRDSFTVDKRHEQSVKSKELAGIYDQAVQIQEDYGKLEMHAFDMEAEIASLQEALVTTIAEKEEALSRVELLTSAVEDLESRLNSAESETSSLLEETAVLTRKLDASESISKKLEASISSLSREKEDMGIELTDVLLEMESERSTWTAKEKAYLEAKQKLNICNKNNCKLSEDLIKVRQELACCREQYSILEAKMIFSKNDTNEEKYCRETFEESERLLKKERNIDTGVNENELHQQLLSITEERDKLLSEIKYMNSVINESELIQAKATIDELSSRISIVEAKMKNDASAYNKENTKLRMQIRWMQPELDAHRGRLKEAINEMKLMDTKYLEASTKLKKDLSFYCREVLRLKEQLKESQVKAS.

The Kinesin motor domain maps to 3–327; it reads RIHVAVRARP…LQFASRALRV (325 aa). 79 to 86 is a binding site for ATP; that stretch reads GQTNSGKT. 4 coiled-coil regions span residues 333–414, 571–646, 708–855, and 894–979; these read VNEI…IENL, ESEA…AAYE, IRDY…KRDS, and DMEA…KEDM.

The protein belongs to the TRAFAC class myosin-kinesin ATPase superfamily. Kinesin family. KIN-7 subfamily.

In Oryza sativa subsp. japonica (Rice), this protein is Kinesin-like protein KIN-7I.